A 204-amino-acid polypeptide reads, in one-letter code: Somatotropin (204 aa).

Positions 1–17 (MDRVVLLLSVLSLGVSS) are cleaved as a signal peptide. A Pyrrolidone carboxylic acid modification is found at Gln-18. Position 36 (His-36) interacts with Zn(2+). Cys-69 and Cys-177 are disulfide-bonded. Glu-186 serves as a coordination point for Zn(2+). The cysteines at positions 194 and 202 are disulfide-linked.

It belongs to the somatotropin/prolactin family.

It is found in the secreted. Functionally, growth hormone plays an important role in growth control and is involved in the regulation of several anabolic processes. Implicated as an osmoregulatory substance important for seawater adaptation. This chain is Somatotropin (gh), found in Lates calcarifer (Barramundi).